Consider the following 739-residue polypeptide: DNA ligase (739 aa).

34 to 38 (DADYD) provides a ligand contact to NAD(+). The span at 49–59 (ARFPHLKRPDS) shows a compositional bias: basic and acidic residues. The segment at 49 to 70 (ARFPHLKRPDSPSEQVGARPGE) is disordered. NAD(+) is bound by residues 83–84 (SL) and E117. K119 serves as the catalytic N6-AMP-lysine intermediate. 4 residues coordinate NAD(+): R140, E175, K291, and K315. Zn(2+) contacts are provided by C420, C423, C438, and C444. In terms of domain architecture, BRCT spans 660–739 (ARDSPVAGKT…DGWLKLIEGL (80 aa)).

The protein belongs to the NAD-dependent DNA ligase family. LigA subfamily. Requires Mg(2+) as cofactor. It depends on Mn(2+) as a cofactor.

The catalysed reaction is NAD(+) + (deoxyribonucleotide)n-3'-hydroxyl + 5'-phospho-(deoxyribonucleotide)m = (deoxyribonucleotide)n+m + AMP + beta-nicotinamide D-nucleotide.. In terms of biological role, DNA ligase that catalyzes the formation of phosphodiester linkages between 5'-phosphoryl and 3'-hydroxyl groups in double-stranded DNA using NAD as a coenzyme and as the energy source for the reaction. It is essential for DNA replication and repair of damaged DNA. The polypeptide is DNA ligase (Ruegeria pomeroyi (strain ATCC 700808 / DSM 15171 / DSS-3) (Silicibacter pomeroyi)).